The sequence spans 123 residues: Large ribosomal subunit protein eL8 (123 aa).

This sequence belongs to the eukaryotic ribosomal protein eL8 family. As to quaternary structure, part of the 50S ribosomal subunit. Probably part of the RNase P complex.

It localises to the cytoplasm. Functionally, multifunctional RNA-binding protein that recognizes the K-turn motif in ribosomal RNA, the RNA component of RNase P, box H/ACA, box C/D and box C'/D' sRNAs. The protein is Large ribosomal subunit protein eL8 of Methanothermobacter thermautotrophicus (strain ATCC 29096 / DSM 1053 / JCM 10044 / NBRC 100330 / Delta H) (Methanobacterium thermoautotrophicum).